Reading from the N-terminus, the 219-residue chain is Probable transaldolase (219 aa).

Lysine 83 (schiff-base intermediate with substrate) is an active-site residue.

It belongs to the transaldolase family. Type 3B subfamily.

Its subcellular location is the cytoplasm. The catalysed reaction is D-sedoheptulose 7-phosphate + D-glyceraldehyde 3-phosphate = D-erythrose 4-phosphate + beta-D-fructose 6-phosphate. It participates in carbohydrate degradation; pentose phosphate pathway; D-glyceraldehyde 3-phosphate and beta-D-fructose 6-phosphate from D-ribose 5-phosphate and D-xylulose 5-phosphate (non-oxidative stage): step 2/3. In terms of biological role, transaldolase is important for the balance of metabolites in the pentose-phosphate pathway. The protein is Probable transaldolase of Cereibacter sphaeroides (strain ATCC 17025 / ATH 2.4.3) (Rhodobacter sphaeroides).